The chain runs to 243 residues: Phosphoadenosine 5'-phosphosulfate reductase (243 aa).

The Nucleophile; cysteine thiosulfonate intermediate role is filled by Cys239.

Belongs to the PAPS reductase family. CysH subfamily.

The protein resides in the cytoplasm. The catalysed reaction is [thioredoxin]-disulfide + sulfite + adenosine 3',5'-bisphosphate + 2 H(+) = [thioredoxin]-dithiol + 3'-phosphoadenylyl sulfate. Its pathway is sulfur metabolism; hydrogen sulfide biosynthesis; sulfite from sulfate: step 3/3. Catalyzes the formation of sulfite from phosphoadenosine 5'-phosphosulfate (PAPS) using thioredoxin as an electron donor. The chain is Phosphoadenosine 5'-phosphosulfate reductase from Proteus mirabilis (strain HI4320).